We begin with the raw amino-acid sequence, 788 residues long: Cadherin-related family member 4 (788 aa).

The signal sequence occupies residues 1 to 16 (MVLLRLLVFLFAPVVS). The Extracellular portion of the chain corresponds to 17-686 (DLCSLPCFIN…DTEAFWQPQP (670 aa)). 4 Cadherin domains span residues 237-338 (LEQA…PPRC), 339-449 (LPAL…APRT), 444-554 (ACAP…EPPF), and 551-674 (EPPF…TPML). N-linked (GlcNAc...) asparagine glycosylation is present at asparagine 242. The helical transmembrane segment at 687-707 (WFVVVLTATGALLLLALGWLL) threads the bilayer. Over 708–788 (GRLLQGLAQL…NTHTGARRWL (81 aa)) the chain is Cytoplasmic.

It is found in the membrane. In terms of biological role, cadherins are calcium-dependent cell adhesion proteins. They preferentially interact with themselves in a homophilic manner in connecting cells; cadherins may thus contribute to the sorting of heterogeneous cell types. The sequence is that of Cadherin-related family member 4 (CDHR4) from Homo sapiens (Human).